A 268-amino-acid polypeptide reads, in one-letter code: Zinc finger protein SNAI2 (268 aa).

Residues M1 to S20 are SNAG domain. The tract at residues S80–L117 is disordered. 4 C2H2-type zinc fingers span residues F128–H150, F159–H181, C185–H207, and F213–H235. The segment at Y241–C264 adopts a C2H2-type 5; atypical zinc-finger fold.

This sequence belongs to the snail C2H2-type zinc-finger protein family. Interacts (via SNAG domain) with LIMD1 (via LIM domains), WTIP (via LIM domains) and AJUBA (via LIM domains). Interacts (via zinc fingers) with KPNA2, KPNB1, and TNPO1. May interact (via zinc fingers) with IPO7. Phosphorylated by GSK3B. Once phosphorylated, it becomes a target for ubiquitination. Post-translationally, ubiquitinated by the SCF(FBXO11) complex; ubiquitination requires previous GSK3B-mediated SNAI2 phosphorylation. As to expression, expressed in most adult human tissues, including spleen, thymus, prostate, testis, ovary, small intestine, colon, heart, brain, placenta, lung, liver, skeletal muscle, kidney and pancreas. Not detected in peripheral blood leukocyte. Expressed in the dermis and in all layers of the epidermis, with high levels of expression in the basal layers (at protein level). Expressed in osteoblasts (at protein level). Expressed in mesenchymal stem cells (at protein level). Expressed in breast tumor cells (at protein level).

The protein localises to the nucleus. The protein resides in the cytoplasm. In terms of biological role, transcriptional repressor that modulates both activator-dependent and basal transcription. Involved in the generation and migration of neural crest cells. Plays a role in mediating RAF1-induced transcriptional repression of the TJ protein, occludin (OCLN) and subsequent oncogenic transformation of epithelial cells. Represses BRCA2 expression by binding to its E2-box-containing silencer and recruiting CTBP1 and HDAC1 in breast cells. In epidermal keratinocytes, binds to the E-box in ITGA3 promoter and represses its transcription. Involved in the regulation of ITGB1 and ITGB4 expression and cell adhesion and proliferation in epidermal keratinocytes. Binds to E-box2 domain of BSG and activates its expression during TGFB1-induced epithelial-mesenchymal transition (EMT) in hepatocytes. Represses E-Cadherin/CDH1 transcription via E-box elements. Involved in osteoblast maturation. Binds to RUNX2 and SOC9 promoters and may act as a positive and negative transcription regulator, respectively, in osteoblasts. Binds to CXCL12 promoter via E-box regions in mesenchymal stem cells and osteoblasts. Plays an essential role in TWIST1-induced EMT and its ability to promote invasion and metastasis. The protein is Zinc finger protein SNAI2 (SNAI2) of Homo sapiens (Human).